Consider the following 521-residue polypeptide: MKVASLLSLALPGAALAATDPFQSRCNEFQNKIDIANVTVRSVAYVAAGQNISQAEVASVCKASVQASVDLCRVTMNISTSDRSHLWAEAWLPRNYTGRFVSTGNGGLAGCVQETDLNFAANFGFATVGTNGGHDGDTAKYFLNNSEVLADFAYRSVHEGTVVGKQLTQLFYDEGYNYSYYLGCSTGGRQGYQQVQRFPDDYDGVIAGSAAMNFINLISWGAFLWKATGLADDPDFISANLWSVIHQEIVRQCDLVDGALDGIIEDPDFCAPVIERLICDGTTNGTSCITGAQAAKVNRALSDFYGPDGTVYYPRLNYGGEADSASLYFTGSMYSRTEEWYKYVVYNDTNWNSSQWTLESAKLALEQNPFNIQAFDPNITAFRDRGGKLLSYHGTQDPIISSTDSKLYYRRVANALNAAPSELDEFYRFFQISGMGHCGDGTGASYIGQGYGTYTSKAPQVNLLRTMVDWVENGKAPEYMPGNKLNANGSIEYMRKHCRYPKHNIHTGPGNYTDPNSWTCV.

Positions 1-17 are cleaved as a signal peptide; it reads MKVASLLSLALPGAALA. 2 disulfides stabilise this stretch: Cys26–Cys72 and Cys61–Cys111. 6 N-linked (GlcNAc...) asparagine glycosylation sites follow: Asn37, Asn51, Asn77, Asn95, Asn144, and Asn177. Cystine bridges form between Cys184–Cys438, Cys253–Cys270, and Cys279–Cys288. Catalysis depends on Ser185, which acts as the Acyl-ester intermediate. Positions 254, 257, 259, 261, and 263 each coordinate Ca(2+). N-linked (GlcNAc...) asparagine glycosylation is found at Asn284, Asn347, Asn352, and Asn378. Residues Asp397 and His437 each act as charge relay system in the active site. N-linked (GlcNAc...) asparagine glycans are attached at residues Asn488 and Asn511. Cys498 and Cys520 form a disulfide bridge.

It belongs to the tannase family. As to quaternary structure, homodimer. In terms of processing, glycosylated.

It is found in the secreted. It carries out the reaction feruloyl-polysaccharide + H2O = ferulate + polysaccharide.. Its activity is regulated as follows. Inhibited by the specific serine esterase inhibitor AEBSF. Involved in degradation of plant cell walls. Hydrolyzes of the feruloyl-arabinose ester bond in arabinoxylans as well as the feruloyl-galactose and feruloyl-arabinose ester bonds in pectin. In Aspergillus niger, this protein is Feruloyl esterase B (faeB).